The following is a 104-amino-acid chain: uncharacterized protein (104 aa).

The stretch at valine 24–serine 69 forms a coiled coil.

This is an uncharacterized protein from Acanthamoeba polyphaga mimivirus (APMV).